The sequence spans 273 residues: Imidazole glycerol phosphate synthase subunit HisF (273 aa).

Catalysis depends on residues Asp11 and Asp134.

This sequence belongs to the HisA/HisF family. Heterodimer of HisH and HisF.

It is found in the cytoplasm. It catalyses the reaction 5-[(5-phospho-1-deoxy-D-ribulos-1-ylimino)methylamino]-1-(5-phospho-beta-D-ribosyl)imidazole-4-carboxamide + L-glutamine = D-erythro-1-(imidazol-4-yl)glycerol 3-phosphate + 5-amino-1-(5-phospho-beta-D-ribosyl)imidazole-4-carboxamide + L-glutamate + H(+). The protein operates within amino-acid biosynthesis; L-histidine biosynthesis; L-histidine from 5-phospho-alpha-D-ribose 1-diphosphate: step 5/9. Its function is as follows. IGPS catalyzes the conversion of PRFAR and glutamine to IGP, AICAR and glutamate. The HisF subunit catalyzes the cyclization activity that produces IGP and AICAR from PRFAR using the ammonia provided by the HisH subunit. The protein is Imidazole glycerol phosphate synthase subunit HisF of Methanocella arvoryzae (strain DSM 22066 / NBRC 105507 / MRE50).